Here is a 376-residue protein sequence, read N- to C-terminus: Neuropeptide receptor 3 (376 aa).

Over 1-29 (MEGGRNCVMTVQQWQPEYNDMNQIRAIFS) the chain is Extracellular. Residues 30–50 (LLYLLVWVGAIVGNTLVLYVL) traverse the membrane as a helical segment. Over 51-66 (TFNQVSLSVRTVFVGC) the chain is Cytoplasmic. A helical transmembrane segment spans residues 67-87 (LAGSDLLMCLFSLPITAISIF). Over 88–89 (SR) the chain is Extracellular. The helical transmembrane segment at 90–110 (VWVFPAIFCKLIGVFQGGTIF) threads the bilayer. A disulfide bond links C98 and C175. The Cytoplasmic portion of the chain corresponds to 111 to 139 (VSSFTLTVIALDRCVLILRPNQEIVNFPR). A helical transmembrane segment spans residues 140–160 (AVFIVFCIWLLGYSLALPVGI). The Extracellular segment spans residues 161 to 197 (YSDIAVYDEICGTFCEENWPDFNPDTGRSGIRRAYGL). Residues 198 to 218 (SVLVLQFGIPALISSICYWMI) traverse the membrane as a helical segment. The Cytoplasmic portion of the chain corresponds to 219–251 (SRVMSDQLARRRGHNIRPESETKLVNRKTRANR). A helical membrane pass occupies residues 252–272 (MMIVMVVGFVLAWMPFNAVNL). Residues 273-284 (YRDLFGISKWYS) lie on the Extracellular side of the membrane. The chain crosses the membrane as a helical span at residues 285–305 (TVFALCHVCAMCSAVLNPIIY). Topologically, residues 306–376 (SWFNPQFRQS…NDYRAGDQLL (71 aa)) are cytoplasmic.

Belongs to the G-protein coupled receptor 1 family.

It localises to the cell membrane. G-protein coupled receptor for flp-15 neuropeptides. Receptor activation assays suggest binding to predicted flp-15 peptides, GGPQGPLRF-NH2 and RGPSGPLRF-NH2. Likely involved in Gi/Go-coupled signaling pathways. This Caenorhabditis elegans protein is Neuropeptide receptor 3.